Reading from the N-terminus, the 548-residue chain is MFS-type transporter TOXA (548 aa).

Polar residues predominate over residues 1 to 12; that stretch reads MDEQIVSASSNV. The disordered stretch occupies residues 1–33; it reads MDEQIVSASSNVKDGVEKQPVKDREDVDANVVP. Positions 14 to 27 are enriched in basic and acidic residues; it reads DGVEKQPVKDREDV. 14 consecutive transmembrane segments (helical) span residues 43-63, 85-105, 114-134, 146-166, 177-197, 204-224, 250-270, 280-300, 316-336, 357-377, 382-402, 411-431, 444-464, and 518-538; these read ISLI…FLGA, AVAW…PLFG, KWLF…CALA, VAGI…ALIV, MIGA…GAIA, WCFW…LFFF, IGAG…QWGG, VVAL…HQYW, GFLL…AALY, MLPI…TISF, APFI…LYTF, IIGY…QAFI, YASA…LCVC, and FLVA…LSWA.

The protein belongs to the major facilitator superfamily. TCR/Tet family.

It is found in the membrane. MFS-type transporter; part of the diffuse TOX2 gene cluster that mediates the biosynthesis of the HC-toxin, cyclic tetrapeptide of structure cyclo(D-Pro-L-Ala-D-Ala-L-Aeo), where Aeo stands for 2-amino-9,10-epoxi-8-oxodecanoic acid. HC-toxin is a determinant of specificity and virulence in the interaction between the producing fungus and its host, maize. TOXA acts as a HC-toxin efflux pump which contributes to self-protection against HC-toxin and/or the secretion of HC-toxin into the extracellular milieu. In Cochliobolus carbonum (Maize leaf spot fungus), this protein is MFS-type transporter TOXA.